Here is a 546-residue protein sequence, read N- to C-terminus: CTP synthase (546 aa).

Residues 1–264 (MRYIVVTGGV…TKYIMKAMRL (264 aa)) are amidoligase domain. A CTP-binding site is contributed by Ser12. Position 12 (Ser12) interacts with UTP. ATP contacts are provided by residues 13–18 (GLGKGI) and Asp70. Mg(2+) is bound by residues Asp70 and Glu140. Residues 147 to 149 (DIE), 185 to 190 (KTKPTQ), and Lys221 each bind CTP. Residues 185-190 (KTKPTQ) and Lys221 contribute to the UTP site. The 237-residue stretch at 298-534 (GSQCTDPMKD…VEAMKAQRLR (237 aa)) folds into the Glutamine amidotransferase type-1 domain. Gly357 contacts L-glutamine. The Nucleophile; for glutamine hydrolysis role is filled by Cys384. L-glutamine contacts are provided by residues 385 to 388 (FGMQ), Glu408, and Arg464. Residues His507 and Glu509 contribute to the active site.

Belongs to the CTP synthase family. Homotetramer.

It carries out the reaction UTP + L-glutamine + ATP + H2O = CTP + L-glutamate + ADP + phosphate + 2 H(+). It catalyses the reaction L-glutamine + H2O = L-glutamate + NH4(+). The enzyme catalyses UTP + NH4(+) + ATP = CTP + ADP + phosphate + 2 H(+). Its pathway is pyrimidine metabolism; CTP biosynthesis via de novo pathway; CTP from UDP: step 2/2. Its activity is regulated as follows. Allosterically activated by GTP, when glutamine is the substrate; GTP has no effect on the reaction when ammonia is the substrate. The allosteric effector GTP functions by stabilizing the protein conformation that binds the tetrahedral intermediate(s) formed during glutamine hydrolysis. Inhibited by the product CTP, via allosteric rather than competitive inhibition. Catalyzes the ATP-dependent amination of UTP to CTP with either L-glutamine or ammonia as the source of nitrogen. Regulates intracellular CTP levels through interactions with the four ribonucleotide triphosphates. The sequence is that of CTP synthase from Methanothrix thermoacetophila (strain DSM 6194 / JCM 14653 / NBRC 101360 / PT) (Methanosaeta thermophila).